Here is an 853-residue protein sequence, read N- to C-terminus: Replication protein A 70 kDa DNA-binding subunit C (853 aa).

Residues Pro118–Pro282 form a disordered region. 6 stretches are compositionally biased toward polar residues: residues Ser124 to Gln144, Ser159 to Asp173, Ser180 to Asp194, Ser201 to His211, Pro222 to Ala249, and Thr263 to Pro278. Positions Trp312 to Ala399 form a DNA-binding region, OB. The C4-type zinc-finger motif lies at Cys602–Cys628.

It belongs to the replication factor A protein 1 family. Heterotrimer of RPA1, RPA2 and RPA3 (canonical replication protein A complex).

It is found in the nucleus. Its function is as follows. Component of the replication protein A complex (RPA) required for DNA recombination, repair and replication. The activity of RPA is mediated by single-stranded DNA binding and protein interactions. Probably involved in repair of double-strand DNA breaks (DSBs) induced by genotoxic stresses. The polypeptide is Replication protein A 70 kDa DNA-binding subunit C (RPA1C) (Arabidopsis thaliana (Mouse-ear cress)).